The sequence spans 86 residues: Conotoxin Lt15a (86 aa).

Residues 1–23 form the signal peptide; it reads MEKLTILILVATVLLAIQVLVQS. Positions 24–49 are excised as a propeptide; that stretch reads DGENPVKGRVKHYAAKRFSALFRGPR.

It belongs to the conotoxin O2 superfamily. In terms of processing, contains 4 disulfide bonds. Expressed by the venom duct.

It is found in the secreted. This chain is Conotoxin Lt15a, found in Conus litteratus (Lettered cone).